An 82-amino-acid chain; its full sequence is Turripeptide Gsg9.1 (82 aa).

Positions 1–23 (MMAKLMITVMTVFFLSLQQGADG) are cleaved as a signal peptide. The propeptide occupies 24–46 (LFERWRKNQMAASRIMGNLITAR). 4-hydroxyproline occurs at positions 49 and 50. Disulfide bonds link cysteine 53–cysteine 68, cysteine 58–cysteine 72, and cysteine 64–cysteine 79. Glutamate 60 and glutamate 63 each carry 4-carboxyglutamate.

This sequence belongs to the Pg turripeptide superfamily. As to expression, expressed by the venom duct.

Its subcellular location is the secreted. This chain is Turripeptide Gsg9.1, found in Gemmula sogodensis (Gem-turris).